Reading from the N-terminus, the 141-residue chain is Large-conductance mechanosensitive channel (141 aa).

Transmembrane regions (helical) follow at residues 16 to 36 and 86 to 106; these read VIDL…VDSL and GNFI…FLMV.

Belongs to the MscL family. In terms of assembly, homopentamer.

It localises to the cell inner membrane. Functionally, channel that opens in response to stretch forces in the membrane lipid bilayer. May participate in the regulation of osmotic pressure changes within the cell. This is Large-conductance mechanosensitive channel from Ralstonia nicotianae (strain ATCC BAA-1114 / GMI1000) (Ralstonia solanacearum).